The chain runs to 388 residues: AIAAVITFLILFTIFGNALVILAVLTSRSLRAPQNLFLVSLAAADILVATLIIPFSLANELLGYWYFRRTWCEVYLALDVLFCTSSIVHLCAISLDRYWAVSRALEYNSKRTPRXIKCIILTVWLIAAAISLPPLIYKGDQGPQPRGRPQCKLNQEAWYILSSSIGSFFAPCLIMILVYLRIYVIAKRSNRRGPRAKGASREGKSKQPHPFPAGASSARPPTLTSSLAVAGEANGHSKPTGEKEGKTPEDPGTLTLPPSWPAFPNSGEGQKEGICGTSPEEEAEEEEEECEPQAAPASSASACNPPLQQPQGSRVLATLRGQVLLGRGLGAAGGQWWRRRAQLTREKRFTFVLAVVIGVFVLCWFPFFFSYSLGAICPQRCKVPHGLF.

A helical membrane pass occupies residues 1-25; it reads AIAAVITFLILFTIFGNALVILAVL. Over 26–36 the chain is Cytoplasmic; it reads TSRSLRAPQNL. The chain crosses the membrane as a helical span at residues 37–62; sequence FLVSLAAADILVATLIIPFSLANELL. Residues 63 to 72 lie on the Extracellular side of the membrane; sequence GYWYFRRTWC. Cysteines 72 and 151 form a disulfide. The chain crosses the membrane as a helical span at residues 73 to 95; that stretch reads EVYLALDVLFCTSSIVHLCAISL. Residues 96–117 are Cytoplasmic-facing; the sequence is DRYWAVSRALEYNSKRTPRXIK. A helical transmembrane segment spans residues 118 to 140; it reads CIILTVWLIAAAISLPPLIYKGD. At 141 to 156 the chain is on the extracellular side; the sequence is QGPQPRGRPQCKLNQE. The helical transmembrane segment at 157–180 threads the bilayer; that stretch reads AWYILSSSIGSFFAPCLIMILVYL. Topologically, residues 181–352 are cytoplasmic; that stretch reads RIYVIAKRSN…LTREKRFTFV (172 aa). Residues 193–309 form a disordered region; sequence GPRAKGASRE…ASACNPPLQQ (117 aa). The span at 239-249 shows a compositional bias: basic and acidic residues; sequence PTGEKEGKTPE. A compositionally biased stretch (acidic residues) spans 279 to 291; it reads PEEEAEEEEEECE. Positions 292-302 are enriched in low complexity; that stretch reads PQAAPASSASA. Residues 353 to 376 traverse the membrane as a helical segment; the sequence is LAVVIGVFVLCWFPFFFSYSLGAI. Over 377 to 385 the chain is Extracellular; sequence CPQRCKVPH. Residues 386-388 traverse the membrane as a helical segment; that stretch reads GLF.

This sequence belongs to the G-protein coupled receptor 1 family. Adrenergic receptor subfamily. ADRA2B sub-subfamily. In terms of assembly, interacts with RAB26. Interacts with PPP1R9B.

Its subcellular location is the cell membrane. Alpha-2 adrenergic receptors mediate the catecholamine-induced inhibition of adenylate cyclase through the action of G proteins. The sequence is that of Alpha-2B adrenergic receptor (ADRA2B) from Orycteropus afer (Aardvark).